The following is a 193-amino-acid chain: Acyl carrier protein phosphodiesterase (193 aa).

Belongs to the AcpH family.

It carries out the reaction holo-[ACP] + H2O = apo-[ACP] + (R)-4'-phosphopantetheine + H(+). Converts holo-ACP to apo-ACP by hydrolytic cleavage of the phosphopantetheine prosthetic group from ACP. In Pectobacterium atrosepticum (strain SCRI 1043 / ATCC BAA-672) (Erwinia carotovora subsp. atroseptica), this protein is Acyl carrier protein phosphodiesterase.